The sequence spans 214 residues: Cytochrome c biogenesis ATP-binding export protein CcmA (214 aa).

One can recognise an ABC transporter domain in the interval 12-214; that stretch reads LAAHDLAFSR…TRMLTLEVAA (203 aa). 44–51 provides a ligand contact to ATP; the sequence is GDNGAGKT.

This sequence belongs to the ABC transporter superfamily. CcmA exporter (TC 3.A.1.107) family. As to quaternary structure, the complex is composed of two ATP-binding proteins (CcmA) and two transmembrane proteins (CcmB).

It localises to the cell inner membrane. It catalyses the reaction heme b(in) + ATP + H2O = heme b(out) + ADP + phosphate + H(+). In terms of biological role, part of the ABC transporter complex CcmAB involved in the biogenesis of c-type cytochromes; once thought to export heme, this seems not to be the case, but its exact role is uncertain. Responsible for energy coupling to the transport system. In Xanthomonas axonopodis pv. citri (strain 306), this protein is Cytochrome c biogenesis ATP-binding export protein CcmA.